A 225-amino-acid polypeptide reads, in one-letter code: Cyclin-dependent kinase inhibitor 3 (225 aa).

2 disordered regions span residues 47 to 94 (AAAA…QRRR) and 130 to 169 (ERKSLKPNSCSREVAAEHAGEHKHNPAAAAAAGRRPPLSP). Over residues 55–67 (CRRRHRRGGRRGC) the composition is skewed to basic residues. Residues 71–82 (GAGSARACGARS) are compositionally biased toward low complexity. Positions 143 to 153 (VAAEHAGEHKH) are enriched in basic and acidic residues.

This sequence belongs to the CDI family. ICK/KRP subfamily.

The polypeptide is Cyclin-dependent kinase inhibitor 3 (KRP3) (Oryza sativa subsp. japonica (Rice)).